The following is a 157-amino-acid chain: 6,7-dimethyl-8-ribityllumazine synthase (157 aa).

5-amino-6-(D-ribitylamino)uracil contacts are provided by residues F23, 57–59 (AFE), and 81–83 (AVI). 86-87 (AT) lines the (2S)-2-hydroxy-3-oxobutyl phosphate pocket. Catalysis depends on H89, which acts as the Proton donor. F114 provides a ligand contact to 5-amino-6-(D-ribitylamino)uracil. Residue R128 coordinates (2S)-2-hydroxy-3-oxobutyl phosphate.

The protein belongs to the DMRL synthase family.

The catalysed reaction is (2S)-2-hydroxy-3-oxobutyl phosphate + 5-amino-6-(D-ribitylamino)uracil = 6,7-dimethyl-8-(1-D-ribityl)lumazine + phosphate + 2 H2O + H(+). The protein operates within cofactor biosynthesis; riboflavin biosynthesis; riboflavin from 2-hydroxy-3-oxobutyl phosphate and 5-amino-6-(D-ribitylamino)uracil: step 1/2. Its function is as follows. Catalyzes the formation of 6,7-dimethyl-8-ribityllumazine by condensation of 5-amino-6-(D-ribitylamino)uracil with 3,4-dihydroxy-2-butanone 4-phosphate. This is the penultimate step in the biosynthesis of riboflavin. The polypeptide is 6,7-dimethyl-8-ribityllumazine synthase (Desulforapulum autotrophicum (strain ATCC 43914 / DSM 3382 / VKM B-1955 / HRM2) (Desulfobacterium autotrophicum)).